A 557-amino-acid polypeptide reads, in one-letter code: MDIENDIRNRRIIRNISNLLDDDILCDVIITIRDGEEIKAHKTILAAGSTYFKTMFTTPMIARDLVTRVNLQMFDKDAVKNIVQYLYNRHISSMNVIDVLKCADYLLIDDLVADCESYIKDYTNHDTCICMYHKLYEMIHIPIVKYIKRMLMSNIPTLITTDAFKKTVFEILFDIISTNDNVYLYREGYKVTILLKWLEHNYITEEQLLCILSCIDIQNLDKKSRLLLYSNKTINMYPSCIQFLIDNKQNRNIIPRQLCLVCHDTKYNVCNPCILVYNINTMEYSVISTIPNHIINYASAIVDNEIIIAGGYNFNNPSLNKVYKINIENKIHVELPPMIKNRCRFSLAVIDDTIYAIGGQNGTNVERTIECYTMGDDKWKLLPDMPIALSSYGMCVLDQYIYIIGGSTLYIDYTSVHAVNSIDMEEDTDTSNKVIRYDTVNNIWETLPNFWTGTIKPGVVSHEDDIYVVCDIKDEKNVKTCIFRYNTNTYNGWELVTTTESRLSALHTILHDNTIMMLHCYESYMLQDTFNVYTREWNHTCHQHSNSYIMHNILPIY.

In terms of domain architecture, BTB spans 26-95 (CDVIITIRDG…LYNRHISSMN (70 aa)). The region spanning 143–223 (IVKYIKRMLM…CIDIQNLDKK (81 aa)) is the BACK domain. 3 Kelch repeats span residues 305–352 (EIII…VIDD), 353–399 (TIYA…VLDQ), and 415–464 (SVHA…SHED).

As to quaternary structure, interacts (via BTB domain) with host CUL3.

The protein resides in the host cytoplasm. In terms of biological role, probable substrate-specific adapter of CUL3-containing E3 ubiquitin-protein ligases which mediate the ubiquitination and subsequent proteasomal degradation of host target proteins. The sequence is that of Kelch repeat and BTB domain-containing protein 2 (KBTB2) from Cowpox virus (strain Brighton Red) (CPV).